Here is a 219-residue protein sequence, read N- to C-terminus: uncharacterized protein (219 aa).

The signal sequence occupies residues 1-15; it reads MYVLFLLSWVLVAGA. Asn118 is a glycosylation site (N-linked (GlcNAc...) asparagine). The tract at residues 138–174 is disordered; it reads GEVGEDPGKRARKRRLGLPIGEPGEDVGKRMRQRQQG.

As to expression, component of the acid-insoluble and acid-soluble organic matrix of calcified layers of the shell (at protein level).

It is found in the secreted. This is an uncharacterized protein from Lottia gigantea (Giant owl limpet).